Reading from the N-terminus, the 263-residue chain is Oxidoreductase UcpA (263 aa).

10-32 (LITGASQGIGEGIARVFARHGAN) contributes to the NAD(+) binding site. S141 provides a ligand contact to substrate. The active-site Proton acceptor is Y155.

Belongs to the short-chain dehydrogenases/reductases (SDR) family.

This chain is Oxidoreductase UcpA (ucpA), found in Salmonella typhi.